The chain runs to 77 residues: DNA-directed RNA polymerase subunit epsilon (77 aa).

Belongs to the RNA polymerase subunit epsilon family. In terms of assembly, RNAP is composed of a core of 2 alpha, a beta and a beta' subunit. The core is associated with a delta subunit, and at least one of epsilon or omega. When a sigma factor is associated with the core the holoenzyme is formed, which can initiate transcription.

It catalyses the reaction RNA(n) + a ribonucleoside 5'-triphosphate = RNA(n+1) + diphosphate. A non-essential component of RNA polymerase (RNAP). This Streptococcus pneumoniae serotype 19F (strain G54) protein is DNA-directed RNA polymerase subunit epsilon.